The chain runs to 580 residues: Formate--tetrahydrofolate ligase (580 aa).

ATP is bound at residue 83–90 (TPMGEGKT).

This sequence belongs to the formate--tetrahydrofolate ligase family.

It catalyses the reaction (6S)-5,6,7,8-tetrahydrofolate + formate + ATP = (6R)-10-formyltetrahydrofolate + ADP + phosphate. Its pathway is one-carbon metabolism; tetrahydrofolate interconversion. This Haloquadratum walsbyi (strain DSM 16790 / HBSQ001) protein is Formate--tetrahydrofolate ligase.